Here is a 317-residue protein sequence, read N- to C-terminus: Aspartate carbamoyltransferase catalytic subunit (317 aa).

Arg-64 and Thr-65 together coordinate carbamoyl phosphate. Lys-92 is an L-aspartate binding site. Positions 114, 144, and 147 each coordinate carbamoyl phosphate. Residues Arg-177 and Arg-232 each coordinate L-aspartate. Residues Gly-273 and Pro-274 each contribute to the carbamoyl phosphate site.

This sequence belongs to the aspartate/ornithine carbamoyltransferase superfamily. ATCase family. In terms of assembly, heterododecamer (2C3:3R2) of six catalytic PyrB chains organized as two trimers (C3), and six regulatory PyrI chains organized as three dimers (R2).

The catalysed reaction is carbamoyl phosphate + L-aspartate = N-carbamoyl-L-aspartate + phosphate + H(+). The protein operates within pyrimidine metabolism; UMP biosynthesis via de novo pathway; (S)-dihydroorotate from bicarbonate: step 2/3. Catalyzes the condensation of carbamoyl phosphate and aspartate to form carbamoyl aspartate and inorganic phosphate, the committed step in the de novo pyrimidine nucleotide biosynthesis pathway. This Thiobacillus denitrificans (strain ATCC 25259 / T1) protein is Aspartate carbamoyltransferase catalytic subunit.